Reading from the N-terminus, the 124-residue chain is Anamorsin homolog (124 aa).

A compositionally biased stretch (polar residues) spans 1-20; that stretch reads MSSPAPSTSHNAANSTQAFS. 2 disordered regions span residues 1–39 and 40–124; these read MSSP…EDRE and AKST…TDDI. Residues Cys-49, Cys-56, Cys-59, and Cys-61 each contribute to the [2Fe-2S] cluster site. The fe-S binding site A stretch occupies residues 49 to 61; that stretch reads CATRRRACKNCTC. [4Fe-4S] cluster is bound by residues Cys-86, Cys-89, Cys-97, and Cys-100. 2 short sequence motifs (cx2C motif) span residues 86–89 and 97–100; these read CGNC and CAGC. The fe-S binding site B stretch occupies residues 86 to 100; that stretch reads CGNCAKGDAFRCAGC.

This sequence belongs to the anamorsin family. As to quaternary structure, monomer. It depends on [2Fe-2S] cluster as a cofactor. [4Fe-4S] cluster is required as a cofactor.

The protein localises to the cytoplasm. It localises to the mitochondrion intermembrane space. Component of the cytosolic iron-sulfur (Fe-S) protein assembly (CIA) machinery. Required for the maturation of extramitochondrial Fe-S proteins. Part of an electron transfer chain functioning in an early step of cytosolic Fe-S biogenesis, facilitating the de novo assembly of a [4Fe-4S] cluster on the cytosolic Fe-S scaffold complex. Electrons are transferred from NADPH via a FAD- and FMN-containing diflavin oxidoreductase. Together with the diflavin oxidoreductase, also required for the assembly of the diferric tyrosyl radical cofactor of ribonucleotide reductase (RNR), probably by providing electrons for reduction during radical cofactor maturation in the catalytic small subunit. The protein is Anamorsin homolog of Trypanosoma brucei brucei (strain 927/4 GUTat10.1).